The sequence spans 251 residues: Probable transcriptional regulatory protein CT1665 (251 aa).

The protein belongs to the TACO1 family.

The protein resides in the cytoplasm. The polypeptide is Probable transcriptional regulatory protein CT1665 (Chlorobaculum tepidum (strain ATCC 49652 / DSM 12025 / NBRC 103806 / TLS) (Chlorobium tepidum)).